A 270-amino-acid chain; its full sequence is Co-chaperone protein DjlA (270 aa).

Residues 1–6 lie on the Periplasmic side of the membrane; the sequence is MNWIGK. The helical transmembrane segment at 7–30 threads the bilayer; sequence LIGMMLGFILAGPIGLIIGLFIGH. Topologically, residues 31 to 270 are cytoplasmic; it reads VVFDQGRFRQ…EQIRKVRSMV (240 aa). Residues 204–270 enclose the J domain; that stretch reads DAYKVLGLTS…EQIRKVRSMV (67 aa).

As to quaternary structure, homodimer.

It is found in the cell inner membrane. Regulatory DnaK co-chaperone. Direct interaction between DnaK and DjlA is needed for the induction of the wcaABCDE operon, involved in the synthesis of a colanic acid polysaccharide capsule, possibly through activation of the RcsB/RcsC phosphotransfer signaling pathway. The colanic acid capsule may help the bacterium survive conditions outside the host. This Coxiella burnetii (strain RSA 493 / Nine Mile phase I) protein is Co-chaperone protein DjlA.